A 698-amino-acid polypeptide reads, in one-letter code: Polyribonucleotide nucleotidyltransferase (698 aa).

Mg(2+)-binding residues include D486 and D492. A KH domain is found at 553-612; the sequence is PRIIVRNIPKDRIGELIGPGGKNVRGISELTGAELYIEDDGKVTISGSNQESAEKAAKMV. In terms of domain architecture, S1 motif spans 622-690; sequence GKIYEGKVKR…KTGKIDLSRK (69 aa).

The protein belongs to the polyribonucleotide nucleotidyltransferase family. The cofactor is Mg(2+).

It localises to the cytoplasm. It carries out the reaction RNA(n+1) + phosphate = RNA(n) + a ribonucleoside 5'-diphosphate. Functionally, involved in mRNA degradation. Catalyzes the phosphorolysis of single-stranded polyribonucleotides processively in the 3'- to 5'-direction. The polypeptide is Polyribonucleotide nucleotidyltransferase (Leptospira interrogans serogroup Icterohaemorrhagiae serovar copenhageni (strain Fiocruz L1-130)).